The sequence spans 106 residues: MAEIRKGDTVKVIAGKEKGKTGRVLEVLREDGRVRVEKLMTVKRHQKKGRSQANPEGGILELPGTIAISSVMVVGKDDKPVRREKIGRELGAKEKARLQKRKAAAK.

Residues 84 to 97 (EKIGRELGAKEKAR) show a composition bias toward basic and acidic residues. Residues 84–106 (EKIGRELGAKEKARLQKRKAAAK) form a disordered region.

It belongs to the universal ribosomal protein uL24 family. As to quaternary structure, part of the 50S ribosomal subunit.

One of two assembly initiator proteins, it binds directly to the 5'-end of the 23S rRNA, where it nucleates assembly of the 50S subunit. Functionally, one of the proteins that surrounds the polypeptide exit tunnel on the outside of the subunit. The polypeptide is Large ribosomal subunit protein uL24 (Anaeromyxobacter dehalogenans (strain 2CP-C)).